A 510-amino-acid chain; its full sequence is Inositol-3-phosphate synthase (510 aa).

Positions 70, 71, 72, 73, 143, 180, 190, 193, 230, 231, 232, 233, 281, 282, 306, 309, 340, 341, 342, 355, 393, 394, 422, and 423 each coordinate NAD(+).

Belongs to the myo-inositol 1-phosphate synthase family. NAD(+) serves as cofactor.

The protein resides in the cytoplasm. The protein localises to the cytosol. It localises to the nucleus. It catalyses the reaction D-glucose 6-phosphate = 1D-myo-inositol 3-phosphate. It participates in polyol metabolism; myo-inositol biosynthesis; myo-inositol from D-glucose 6-phosphate: step 1/2. Key enzyme in myo-inositol biosynthesis pathway that catalyzes the conversion of glucose 6-phosphate to 1-myo-inositol 1-phosphate in a NAD-dependent manner. The protein is Inositol-3-phosphate synthase of Brassica napus (Rape).